The following is a 203-amino-acid chain: Large ribosomal subunit protein bL25 (203 aa).

Positions 182 to 203 (EITEEPETEEKKEEGASSVSNS) are disordered.

This sequence belongs to the bacterial ribosomal protein bL25 family. CTC subfamily. Part of the 50S ribosomal subunit; part of the 5S rRNA/L5/L18/L25 subcomplex. Contacts the 5S rRNA. Binds to the 5S rRNA independently of L5 and L18.

Its function is as follows. This is one of the proteins that binds to the 5S RNA in the ribosome where it forms part of the central protuberance. The polypeptide is Large ribosomal subunit protein bL25 (Caldicellulosiruptor saccharolyticus (strain ATCC 43494 / DSM 8903 / Tp8T 6331)).